Here is a 219-residue protein sequence, read N- to C-terminus: MIRTVDIYDTSIIGVFATCTEDLALVPPLTKPEVCTILEEALDVRVVETLINGSTVVGALSRGNSNGFLLPYGSSVEEMQKRTGVPAGILPDRLNAVGNIVLANDSAALVHPELSDRALEIIARTLKVEVYRGTIAGIKNVGMAGVVTNKGLLVHPKVTVSEREALEEIFGLPVNIGTTNFGTQMLGSGLLANSKNFVAGSETTGPELGRIEEALGFLE.

It belongs to the eIF-6 family.

Functionally, binds to the 50S ribosomal subunit and prevents its association with the 30S ribosomal subunit to form the 70S initiation complex. This Methanosarcina mazei (strain ATCC BAA-159 / DSM 3647 / Goe1 / Go1 / JCM 11833 / OCM 88) (Methanosarcina frisia) protein is Translation initiation factor 6.